Here is a 228-residue protein sequence, read N- to C-terminus: Uracil-DNA glycosylase (228 aa).

Asp-64 (proton acceptor) is an active-site residue.

It belongs to the uracil-DNA glycosylase (UDG) superfamily. UNG family.

It is found in the cytoplasm. It carries out the reaction Hydrolyzes single-stranded DNA or mismatched double-stranded DNA and polynucleotides, releasing free uracil.. Excises uracil residues from the DNA which can arise as a result of misincorporation of dUMP residues by DNA polymerase or due to deamination of cytosine. This Yersinia pestis bv. Antiqua (strain Antiqua) protein is Uracil-DNA glycosylase.